We begin with the raw amino-acid sequence, 597 residues long: Hydrogenase-1 large chain (597 aa).

Residues C76, C79, C576, and C579 each contribute to the Ni(2+) site.

It belongs to the [NiFe]/[NiFeSe] hydrogenase large subunit family. As to quaternary structure, heterodimer of a large and a small subunit. Ni(2+) serves as cofactor.

The protein resides in the cell membrane. It carries out the reaction H2 + A = AH2. Its function is as follows. This is one of three E.coli hydrogenases synthesized in response to different physiological conditions. HYD1 is believed to have a role in hydrogen cycling during fermentative growth. In Escherichia coli (strain K12), this protein is Hydrogenase-1 large chain (hyaB).